A 158-amino-acid chain; its full sequence is Ribosome maturation factor RimP (158 aa).

It belongs to the RimP family.

It is found in the cytoplasm. Its function is as follows. Required for maturation of 30S ribosomal subunits. The chain is Ribosome maturation factor RimP from Lactobacillus acidophilus (strain ATCC 700396 / NCK56 / N2 / NCFM).